Consider the following 278-residue polypeptide: Transmembrane protein 45B (278 aa).

7 helical membrane-spanning segments follow: residues 7–27 (HALPGSFFLIVGLWWSVKYPL), 49–69 (IIEGAVKTLFAIIGILAEQFV), 95–115 (YLFFGVSGLMDMITYLYFHIV), 117–137 (LGLDRVVLAMAVFIEGFLFYF), 149–169 (IHSLLLFGLFGAAVSISLEVI), 183–203 (LLILQGTWFWQIGFVLFPPFG), and 215–235 (IMFITMCFCWHYLVALCIVAI). Phosphoserine occurs at positions 273 and 275.

Belongs to the TMEM45 family.

The protein resides in the endosome membrane. The protein localises to the lysosome membrane. Its subcellular location is the golgi apparatus. It is found in the trans-Golgi network membrane. Functionally, plays a role in innate immunity. In Mus musculus (Mouse), this protein is Transmembrane protein 45B (Tmem45b).